The primary structure comprises 1177 residues: MFELNNFDAIQIGLASPEQIREWSRGEVKKPETINYRTLKPEKDGLFCERIFGPMKDWECHCGKYKRVRYKGIVCDRCGVEVTKAKVRRERMGHIELAAPVSHIWYFKGIPSRMGLLMDMSPRALEKVLYFASYIVIDPKETPLLKKQLLNEKEYREAIDKYGEDSFVAGMGAEAIQDLLGQIDLIAGSKELKEDLKQSTGQKRVRIIRRLEVVESFAKSGNNPKWMIINVIPVIPPDLRPMVQLDGGRFATSDLNDLYRRVINRNNRLKKLLDLGAPDIIVRNEKRMLQEAVDALIDNGRRGRPVTGPGNRPLKSLSDMLKGKQGRFRQNLLGKRVDYSGRSVIVVGPELKMYQCGLPKEMALELFKPFVMKKLVQDGIAHNIKSAKRMVERVLPQVWDVLEEVITDHPVLLNRAPTLHRLGIQAFQPVLVEGRAIKLHPLACTAYNADFDGDQMAVHVPLSVEAQAEARFLMLAAGNILKPSDGKPVCVPTQDMVLGSYYLTMDRTGAKGEGMTFSNKDEAVMAYESKYIDIHAQINVRVYKEIDGVLKSGIIKTTVGKLIFNESIPQDLGFVNREDEKEKFNLEIDFLVTKKSLGKVIDQSYMLHGPTKTSIMLDNIKALGYHYSSIGAVTVAASDMIVPPVKYDLLHEADETIDKIEKMYKRGFISEDERYERVIEKWTKTTEEVADALMDSLDKFNPIYMMADSGARGSKSQIKQLAGMRGLMASPSGKILELPIRASFREGLDVLEYFISTHGARKGNADTALKTADSGYLTRRLVDVCQDVIVREEDCGTDNGIYVSEIKEGSEVIEELRERLIGRYTAEDVVDPNSGEIIVARNEYMNPIIADKVVSAGIKKVKIRSAFTCNCKIGVCAKCYGMNMATAKKIDIGEAVGIIAAQSIGEPGTQLTMRTFHTGGVAGSDITQGLPRVEELFEARKPKGLAIVSEIHGNVRIEETKKKRAVFVMGADGDERSYDIPFGSRLKVSDGDYIEAGDEITEGSVNPHDIMNIKGVDGARRYLLSEVQKVYRLQGVDINDKHLEVVVKQMTRKVKILESGDTELLPGIMIDIFDFQEANDKVREFGGEEAKGEQSLLGITKAALATDSFLSAASFQETTRVLTEAAIKGKVDPLIGLKENVIIGKLIPAGTGMMKYKGLNLNTKNEKIEENETEIVE.

Residues cysteine 60, cysteine 62, cysteine 75, and cysteine 78 each coordinate Zn(2+). Mg(2+) is bound by residues aspartate 450, aspartate 452, and aspartate 454. Zn(2+)-binding residues include cysteine 795, cysteine 869, cysteine 876, and cysteine 879.

Belongs to the RNA polymerase beta' chain family. In terms of assembly, the RNAP catalytic core consists of 2 alpha, 1 beta, 1 beta' and 1 omega subunit. When a sigma factor is associated with the core the holoenzyme is formed, which can initiate transcription. It depends on Mg(2+) as a cofactor. The cofactor is Zn(2+).

The enzyme catalyses RNA(n) + a ribonucleoside 5'-triphosphate = RNA(n+1) + diphosphate. In terms of biological role, DNA-dependent RNA polymerase catalyzes the transcription of DNA into RNA using the four ribonucleoside triphosphates as substrates. The chain is DNA-directed RNA polymerase subunit beta' from Clostridium botulinum (strain Eklund 17B / Type B).